The primary structure comprises 647 residues: Nucleolar GTP-binding protein 1 (647 aa).

One can recognise an OBG-type G domain in the interval Arg168–Leu340. Residues Gly174–Ser181, Asp220–Ile224, and Asn288–Asp291 contribute to the GTP site. At Ser563 the chain carries Phosphoserine. The interval Ala594–Arg647 is disordered. Residues Met598–Asn626 are compositionally biased toward basic and acidic residues.

It belongs to the TRAFAC class OBG-HflX-like GTPase superfamily. OBG GTPase family. NOG subfamily. Associated with nucleolar and cytoplasmic pre-60S particles. Directly interacts with RLP24.

The protein resides in the nucleus. It localises to the nucleolus. In terms of biological role, involved in the biogenesis of the 60S ribosomal subunit. In Saccharomyces cerevisiae (strain ATCC 204508 / S288c) (Baker's yeast), this protein is Nucleolar GTP-binding protein 1 (NOG1).